Here is a 212-residue protein sequence, read N- to C-terminus: uncharacterized protein (212 aa).

It belongs to the mimivirus R683/R861 family.

This is an uncharacterized protein from Acanthamoeba polyphaga (Amoeba).